We begin with the raw amino-acid sequence, 141 residues long: MRHQKAGRKLNRTASHRKAMFANMAASLITHEQIVTTLPKAKEIRPIVERLVTLGKRGDLHARRQAISQIRDQDAVRKLFDAIATRYASRNGGYLRIMKAGFRQGDNAPLAVIEFVERDVDAKGAADKARVAAEAETAEAA.

It belongs to the bacterial ribosomal protein bL17 family. Part of the 50S ribosomal subunit. Contacts protein L32.

This chain is Large ribosomal subunit protein bL17, found in Allorhizobium ampelinum (strain ATCC BAA-846 / DSM 112012 / S4) (Agrobacterium vitis (strain S4)).